Consider the following 564-residue polypeptide: Putative ABC transporter ATP-binding protein PBPRA2240 (564 aa).

2 ABC transporter domains span residues 3-244 and 299-533; these read IEFS…GIRE and LTVN…ANLT. Residues 37–44 and 332–339 each bind ATP; these read GPSGSGKS and GKNGSGKS.

This sequence belongs to the ABC transporter superfamily.

It localises to the cell inner membrane. Probably part of an ABC transporter complex. Responsible for energy coupling to the transport system. The protein is Putative ABC transporter ATP-binding protein PBPRA2240 of Photobacterium profundum (strain SS9).